A 395-amino-acid chain; its full sequence is Argininosuccinate synthase (395 aa).

ATP is bound at residue 7 to 15; sequence LYSGGLDTS. Position 83 (tyrosine 83) interacts with L-citrulline. Glycine 113 lines the ATP pocket. Threonine 115, asparagine 119, and aspartate 120 together coordinate L-aspartate. Asparagine 119 is a binding site for L-citrulline. L-citrulline is bound by residues arginine 123, serine 169, serine 178, glutamate 253, and tyrosine 265.

The protein belongs to the argininosuccinate synthase family. Type 1 subfamily. Homotetramer.

The protein resides in the cytoplasm. It catalyses the reaction L-citrulline + L-aspartate + ATP = 2-(N(omega)-L-arginino)succinate + AMP + diphosphate + H(+). Its pathway is amino-acid biosynthesis; L-arginine biosynthesis; L-arginine from L-ornithine and carbamoyl phosphate: step 2/3. The polypeptide is Argininosuccinate synthase (Picrophilus torridus (strain ATCC 700027 / DSM 9790 / JCM 10055 / NBRC 100828 / KAW 2/3)).